The chain runs to 514 residues: Putative fucosyltransferase 10 (514 aa).

Residues Asn-185, Asn-210, Asn-355, Asn-377, and Asn-456 are each glycosylated (N-linked (GlcNAc...) asparagine).

The protein belongs to the glycosyltransferase 37 family. As to expression, expressed in root, leaves, stems and seedlings.

It localises to the golgi apparatus. It functions in the pathway protein modification; protein glycosylation. In terms of biological role, may be involved in cell wall biosynthesis. May act as a fucosyltransferase. The chain is Putative fucosyltransferase 10 (FUT10) from Arabidopsis thaliana (Mouse-ear cress).